The sequence spans 271 residues: Zinc-finger homeodomain protein 8 (271 aa).

Ser-16 is modified (phosphoserine). The ZF-HD dimerization-type; degenerate zinc-finger motif lies at 56–107 (YKECLKNHAAGIGGHALDGCGEFMPSPSFNSNDPASLTCAACGCHRNFHRRE). The tract at residues 125–154 (HNRHQLPPPPPPHLAGIRSPDDDDSASPPP) is disordered. A DNA-binding region (homeobox) is located at residues 179 to 242 (RKRFRTKFSQ…NNKISGRSGA (64 aa)).

In terms of assembly, homo- and heterodimer with other ZFHD proteins. Interacts with MIF1, MIF2 and MIF3; these interactions prevent nuclear localization and DNA-binding to inhibit transcription regulation activity. Binds to ZHD1, ZHD2, ZHD4, ZHD10 and ZHD11. Interacts with HIPP30. In terms of tissue distribution, mostly expressed in flowers and inflorescence.

The protein localises to the nucleus. Functionally, putative transcription factor. The chain is Zinc-finger homeodomain protein 8 (ZHD8) from Arabidopsis thaliana (Mouse-ear cress).